Here is a 323-residue protein sequence, read N- to C-terminus: Acetyl-coenzyme A carboxylase carboxyl transferase subunit alpha (323 aa).

Residues 39–293 (RLAGKSQQLT…KRSLAESLRQ (255 aa)) enclose the CoA carboxyltransferase C-terminal domain.

The protein belongs to the AccA family. As to quaternary structure, acetyl-CoA carboxylase is a heterohexamer composed of biotin carboxyl carrier protein (AccB), biotin carboxylase (AccC) and two subunits each of ACCase subunit alpha (AccA) and ACCase subunit beta (AccD).

It is found in the cytoplasm. It carries out the reaction N(6)-carboxybiotinyl-L-lysyl-[protein] + acetyl-CoA = N(6)-biotinyl-L-lysyl-[protein] + malonyl-CoA. The protein operates within lipid metabolism; malonyl-CoA biosynthesis; malonyl-CoA from acetyl-CoA: step 1/1. In terms of biological role, component of the acetyl coenzyme A carboxylase (ACC) complex. First, biotin carboxylase catalyzes the carboxylation of biotin on its carrier protein (BCCP) and then the CO(2) group is transferred by the carboxyltransferase to acetyl-CoA to form malonyl-CoA. The protein is Acetyl-coenzyme A carboxylase carboxyl transferase subunit alpha of Cupriavidus necator (strain ATCC 17699 / DSM 428 / KCTC 22496 / NCIMB 10442 / H16 / Stanier 337) (Ralstonia eutropha).